Consider the following 275-residue polypeptide: Nitrogenase iron protein 2 (275 aa).

9–16 contacts ATP; sequence GKGGIGKS. Position 97 (cysteine 97) interacts with [4Fe-4S] cluster. Arginine 100 is modified (ADP-ribosylarginine; by dinitrogenase reductase ADP-ribosyltransferase). Cysteine 132 provides a ligand contact to [4Fe-4S] cluster.

This sequence belongs to the NifH/BchL/ChlL family. As to quaternary structure, homodimer. The cofactor is [4Fe-4S] cluster. The reversible ADP-ribosylation of Arg-100 inactivates the nitrogenase reductase and regulates nitrogenase activity.

It catalyses the reaction N2 + 8 reduced [2Fe-2S]-[ferredoxin] + 16 ATP + 16 H2O = H2 + 8 oxidized [2Fe-2S]-[ferredoxin] + 2 NH4(+) + 16 ADP + 16 phosphate + 6 H(+). In terms of biological role, the key enzymatic reactions in nitrogen fixation are catalyzed by the nitrogenase complex, which has 2 components: the iron protein (component 2) and a component 1 which is either a molybdenum-iron protein, a vanadium-iron, or an iron-iron protein. The chain is Nitrogenase iron protein 2 (anfH) from Rhodobacter capsulatus (Rhodopseudomonas capsulata).